The primary structure comprises 328 residues: D-cysteine desulfhydrase (328 aa).

Lys51 bears the N6-(pyridoxal phosphate)lysine mark.

This sequence belongs to the ACC deaminase/D-cysteine desulfhydrase family. As to quaternary structure, homodimer. It depends on pyridoxal 5'-phosphate as a cofactor.

The enzyme catalyses D-cysteine + H2O = hydrogen sulfide + pyruvate + NH4(+) + H(+). Its function is as follows. Catalyzes the alpha,beta-elimination reaction of D-cysteine and of several D-cysteine derivatives. It could be a defense mechanism against D-cysteine. This Escherichia coli (strain UTI89 / UPEC) protein is D-cysteine desulfhydrase.